We begin with the raw amino-acid sequence, 204 residues long: Protein Mis18-alpha (204 aa).

Phosphoserine is present on residues S13, S16, and S17. A Mis18 domain is found at 51–149 (PLVFLCARCR…SVEAVESYTL (99 aa)). Zn(2+) contacts are provided by C56, C59, C112, and C115. Residue K133 forms a Glycyl lysine isopeptide (Lys-Gly) (interchain with G-Cter in SUMO2) linkage. Residue S204 is modified to Phosphoserine.

This sequence belongs to the mis18 family. As to quaternary structure, homodimer, and heterodimer with OIP5/MIS18B. Identified in a complex containing MIS18A, OIP5/MIS18B, MIS18BP1, RBBP7 and RBBP4.

The protein resides in the nucleus. The protein localises to the chromosome. Its subcellular location is the centromere. In terms of biological role, required for recruitment of CENPA to centromeres and normal chromosome segregation during mitosis. The sequence is that of Protein Mis18-alpha (Mis18a) from Mus musculus (Mouse).